The primary structure comprises 1082 residues: Mediator of RNA polymerase II transcription subunit 14 (1082 aa).

Disordered regions lie at residues 1–80 (MTTT…APPP) and 319–343 (EATS…NLPL). N-acetylthreonine is present on Thr2. Ser7 carries the post-translational modification Phosphoserine. The segment covering 13-28 (NEERLSNEMHALKNRS) has biased composition (basic and acidic residues). A compositionally biased stretch (polar residues) spans 29-59 (EQNGQEQQGPVKNTQLHGPSATDPETTATQK). The segment covering 321-340 (TSTNGDSENNEENSSSNGNN) has biased composition (low complexity). The residue at position 1036 (Thr1036) is a Phosphothreonine.

Belongs to the Mediator complex subunit 14 family. As to quaternary structure, component of the Mediator complex, which is composed of at least 21 subunits that form three structurally distinct submodules. The Mediator head module contains MED6, MED8, MED11, SRB4/MED17, SRB5/MED18, ROX3/MED19, SRB2/MED20 and SRB6/MED22, the middle module contains MED1, MED4, NUT1/MED5, MED7, CSE2/MED9, NUT2/MED10, SRB7/MED21 and SOH1/MED31, and the tail module contains MED2, PGD1/MED3, RGR1/MED14, GAL11/MED15 and SIN4/MED16. The head and the middle modules interact directly with RNA polymerase II, whereas the elongated tail module interacts with gene-specific regulatory proteins.

It is found in the nucleus. Component of the Mediator complex, a coactivator involved in the regulated transcription of nearly all RNA polymerase II-dependent genes. Mediator functions as a bridge to convey information from gene-specific regulatory proteins to the basal RNA polymerase II transcription machinery. The Mediator complex, having a compact conformation in its free form, is recruited to promoters by direct interactions with regulatory proteins and serves for the assembly of a functional preinitiation complex with RNA polymerase II and the general transcription factors. The Mediator complex unfolds to an extended conformation and partially surrounds RNA polymerase II, specifically interacting with the unphosphorylated form of the C-terminal domain (CTD) of RNA polymerase II. The Mediator complex dissociates from the RNA polymerase II holoenzyme and stays at the promoter when transcriptional elongation begins. The sequence is that of Mediator of RNA polymerase II transcription subunit 14 (RGR1) from Saccharomyces cerevisiae (strain ATCC 204508 / S288c) (Baker's yeast).